Here is a 434-residue protein sequence, read N- to C-terminus: uncharacterized protein (434 aa).

11 helical membrane-spanning segments follow: residues 50–70 (GSIAFGLSIGFVASVGISFTL), 72–92 (TGLLNAWLLFLPTDILGVLAI), 95–115 (LMAFGLGAIWGVLILTCLLPV), 135–155 (SPVVSAFALFPLVAIFYQFGW), 158–178 (SLIAAVVVLMTRVVVVRYFPH), 179–199 (LNPESIEIFIGMVMLLGIAIT), 229–249 (LPYIAIVGALIAAVASMKIFA), 288–308 (GFVPLIATTALATGVYAVAGF), 319–339 (PNPMVAAVLGAVVISAEVLLL), 376–396 (IFAAIKMAGYTGFSIAVAIYF), and 412–432 (VVAVMITGILLNVLYWLGLFV).

It localises to the cell membrane. This is an uncharacterized protein from Escherichia coli (strain K12).